A 624-amino-acid polypeptide reads, in one-letter code: Chaperone protein HtpG (624 aa).

Residues 1-336 (MKGQETRGFQ…SNDLPLNVSR (336 aa)) are a; substrate-binding. Positions 337–552 (EILQDSTVTR…ADEMSTQMAK (216 aa)) are b. The segment at 553–624 (LFAAAGQAVP…IRRMNQLLVS (72 aa)) is c.

The protein belongs to the heat shock protein 90 family. As to quaternary structure, homodimer.

It localises to the cytoplasm. Its function is as follows. Molecular chaperone. Has ATPase activity. The chain is Chaperone protein HtpG from Citrobacter koseri (strain ATCC BAA-895 / CDC 4225-83 / SGSC4696).